A 121-amino-acid chain; its full sequence is Copper transport protein CCH (121 aa).

A2 carries the N-acetylalanine modification. The region spanning A2–S65 is the HMA domain. Positions 13 and 16 each coordinate Cu cation. The tract at residues E70–V121 is disordered. The span at A73–V121 shows a compositional bias: basic and acidic residues.

Belongs to the ATX1 family. Cu cation is required as a cofactor. Expressed in phloem (at protein level).

Functionally, involved in copper homeostasis. Can complement the yeast mutants atx1 and sod1. This Arabidopsis thaliana (Mouse-ear cress) protein is Copper transport protein CCH (CCH).